Here is a 274-residue protein sequence, read N- to C-terminus: Rhamnulose-1-phosphate aldolase (274 aa).

Glu117 is a catalytic residue. Residues His141, His143, and His212 each contribute to the Zn(2+) site.

This sequence belongs to the aldolase class II family. RhaD subfamily. Homotetramer. The cofactor is Zn(2+).

The protein resides in the cytoplasm. It carries out the reaction L-rhamnulose 1-phosphate = (S)-lactaldehyde + dihydroxyacetone phosphate. The protein operates within carbohydrate degradation; L-rhamnose degradation; glycerone phosphate from L-rhamnose: step 3/3. Catalyzes the reversible cleavage of L-rhamnulose-1-phosphate to dihydroxyacetone phosphate (DHAP) and L-lactaldehyde. The polypeptide is Rhamnulose-1-phosphate aldolase (Yersinia pseudotuberculosis serotype I (strain IP32953)).